The chain runs to 393 residues: uncharacterized protein (393 aa).

Topologically, residues methionine 1–leucine 17 are cytoplasmic. Residues leucine 18 to phenylalanine 38 form a helical membrane-spanning segment. Residues glutamate 39–proline 46 are Vacuolar-facing. The helical transmembrane segment at phenylalanine 47–alanine 67 threads the bilayer. Residues valine 68–glutamate 132 are Cytoplasmic-facing. The residue at position 93 (serine 93) is a Phosphoserine. Residues phenylalanine 133–valine 153 traverse the membrane as a helical segment. The Vacuolar portion of the chain corresponds to alanine 154–glutamine 156. The helical transmembrane segment at threonine 157–valine 176 threads the bilayer. Residues glutamate 177 to serine 182 are Cytoplasmic-facing. A helical membrane pass occupies residues lysine 183–serine 200. The Vacuolar segment spans residues aspartate 201–aspartate 219. A helical membrane pass occupies residues alanine 220–tyrosine 240. At serine 241–lysine 257 the chain is on the cytoplasmic side. The helical transmembrane segment at isoleucine 258 to leucine 278 threads the bilayer. Residues aspartate 279–proline 292 are Vacuolar-facing. Residues lysine 293–alanine 313 traverse the membrane as a helical segment. Topologically, residues lysine 314 to proline 321 are cytoplasmic. The chain crosses the membrane as a helical span at residues leucine 322 to phenylalanine 342. The Vacuolar portion of the chain corresponds to lysine 343–lysine 345. A helical membrane pass occupies residues threonine 346 to asparagine 366. Topologically, residues lysine 367–asparagine 393 are cytoplasmic.

It belongs to the TPT transporter family.

It is found in the vacuole membrane. This is an uncharacterized protein from Saccharomyces cerevisiae (strain ATCC 204508 / S288c) (Baker's yeast).